Here is a 231-residue protein sequence, read N- to C-terminus: NADH-ubiquinone oxidoreductase chain 4 (231 aa).

Helical transmembrane passes span 1-21 (PIAGSMVLAAILLKLGGYGII), 34-54 (LFIPFITLALWGATLANLTCL), 61-80 (SLIAYSSISHMGLVVAAITI), 84-106 (WGLSGAMALMIAHGFTSSALFCL), 118-138 (VLILTRGLHNILPMATTWWLL), and 156-178 (LLIMSSLFNWCPTTIILLGLSML).

The protein belongs to the complex I subunit 4 family.

It localises to the mitochondrion membrane. It catalyses the reaction a ubiquinone + NADH + 5 H(+)(in) = a ubiquinol + NAD(+) + 4 H(+)(out). Functionally, core subunit of the mitochondrial membrane respiratory chain NADH dehydrogenase (Complex I) that is believed to belong to the minimal assembly required for catalysis. Complex I functions in the transfer of electrons from NADH to the respiratory chain. The immediate electron acceptor for the enzyme is believed to be ubiquinone. The protein is NADH-ubiquinone oxidoreductase chain 4 (MT-ND4) of Azemiops feae (Fea's viper).